The following is a 138-amino-acid chain: Putative pre-16S rRNA nuclease (138 aa).

The protein belongs to the YqgF nuclease family.

It is found in the cytoplasm. Its function is as follows. Could be a nuclease involved in processing of the 5'-end of pre-16S rRNA. The sequence is that of Putative pre-16S rRNA nuclease from Fusobacterium nucleatum subsp. nucleatum (strain ATCC 25586 / DSM 15643 / BCRC 10681 / CIP 101130 / JCM 8532 / KCTC 2640 / LMG 13131 / VPI 4355).